The chain runs to 276 residues: uncharacterized protein (276 aa).

Residues Pro-20–Ser-137 form the AB hydrolase-1 domain. The interval Gly-57 to Tyr-76 is disordered.

The protein belongs to the AB hydrolase superfamily.

This is an uncharacterized protein from Staphylococcus aureus (strain USA300).